We begin with the raw amino-acid sequence, 142 residues long: uncharacterized protein (142 aa).

Residues 18–137 (QSRSYSCGPA…RIFTGNVLVV (120 aa)) enclose the Peptidase C39 domain.

This is an uncharacterized protein from Methanothermobacter thermautotrophicus (strain ATCC 29096 / DSM 1053 / JCM 10044 / NBRC 100330 / Delta H) (Methanobacterium thermoautotrophicum).